The sequence spans 254 residues: 3-deoxy-manno-octulosonate cytidylyltransferase (254 aa).

Belongs to the KdsB family.

It is found in the cytoplasm. It catalyses the reaction 3-deoxy-alpha-D-manno-oct-2-ulosonate + CTP = CMP-3-deoxy-beta-D-manno-octulosonate + diphosphate. It functions in the pathway nucleotide-sugar biosynthesis; CMP-3-deoxy-D-manno-octulosonate biosynthesis; CMP-3-deoxy-D-manno-octulosonate from 3-deoxy-D-manno-octulosonate and CTP: step 1/1. The protein operates within bacterial outer membrane biogenesis; lipopolysaccharide biosynthesis. Activates KDO (a required 8-carbon sugar) for incorporation into bacterial lipopolysaccharide in Gram-negative bacteria. The chain is 3-deoxy-manno-octulosonate cytidylyltransferase from Pseudomonas syringae pv. syringae (strain B728a).